We begin with the raw amino-acid sequence, 405 residues long: 8-amino-7-oxononanoate synthase 2 (405 aa).

Arg20 provides a ligand contact to substrate. 116-117 (GY) lines the pyridoxal 5'-phosphate pocket. His141 is a substrate binding site. Pyridoxal 5'-phosphate is bound by residues Ser187, His215, and Thr243. Lys246 carries the N6-(pyridoxal phosphate)lysine modification. Residue Thr369 coordinates substrate.

It belongs to the class-II pyridoxal-phosphate-dependent aminotransferase family. BioF subfamily. In terms of assembly, homodimer. Requires pyridoxal 5'-phosphate as cofactor.

It catalyses the reaction 6-carboxyhexanoyl-[ACP] + L-alanine + H(+) = (8S)-8-amino-7-oxononanoate + holo-[ACP] + CO2. It functions in the pathway cofactor biosynthesis; biotin biosynthesis. Catalyzes the decarboxylative condensation of pimeloyl-[acyl-carrier protein] and L-alanine to produce 8-amino-7-oxononanoate (AON), [acyl-carrier protein], and carbon dioxide. In Polaromonas sp. (strain JS666 / ATCC BAA-500), this protein is 8-amino-7-oxononanoate synthase 2.